The chain runs to 425 residues: Enolase (425 aa).

Gln-163 contributes to the (2R)-2-phosphoglycerate binding site. Glu-205 (proton donor) is an active-site residue. Mg(2+) is bound by residues Asp-242, Glu-285, and Asp-312. (2R)-2-phosphoglycerate contacts are provided by Lys-337, Arg-366, Ser-367, and Lys-388. Lys-337 acts as the Proton acceptor in catalysis.

Belongs to the enolase family. It depends on Mg(2+) as a cofactor.

It is found in the cytoplasm. The protein resides in the secreted. The protein localises to the cell surface. The enzyme catalyses (2R)-2-phosphoglycerate = phosphoenolpyruvate + H2O. Its pathway is carbohydrate degradation; glycolysis; pyruvate from D-glyceraldehyde 3-phosphate: step 4/5. In terms of biological role, catalyzes the reversible conversion of 2-phosphoglycerate (2-PG) into phosphoenolpyruvate (PEP). It is essential for the degradation of carbohydrates via glycolysis. The sequence is that of Enolase from Jannaschia sp. (strain CCS1).